The chain runs to 431 residues: Enolase (431 aa).

Residue Q167 participates in (2R)-2-phosphoglycerate binding. Residue E209 is the Proton donor of the active site. 3 residues coordinate Mg(2+): D246, E289, and D316. Residues K341, R370, S371, and K392 each contribute to the (2R)-2-phosphoglycerate site. The Proton acceptor role is filled by K341.

It belongs to the enolase family. As to quaternary structure, component of the RNA degradosome, a multiprotein complex involved in RNA processing and mRNA degradation. Mg(2+) is required as a cofactor.

It is found in the cytoplasm. The protein resides in the secreted. Its subcellular location is the cell surface. It catalyses the reaction (2R)-2-phosphoglycerate = phosphoenolpyruvate + H2O. It participates in carbohydrate degradation; glycolysis; pyruvate from D-glyceraldehyde 3-phosphate: step 4/5. Functionally, catalyzes the reversible conversion of 2-phosphoglycerate (2-PG) into phosphoenolpyruvate (PEP). It is essential for the degradation of carbohydrates via glycolysis. In Shewanella sp. (strain ANA-3), this protein is Enolase.